The chain runs to 488 residues: 3-octaprenyl-4-hydroxybenzoate carboxy-lyase (488 aa).

Mn(2+) is bound at residue asparagine 172. Prenylated FMN is bound by residues 175 to 177 (IYR), 189 to 191 (RWL), and 194 to 195 (RG). Glutamate 238 provides a ligand contact to Mn(2+). Aspartate 287 functions as the Proton donor in the catalytic mechanism.

This sequence belongs to the UbiD family. As to quaternary structure, homohexamer. It depends on prenylated FMN as a cofactor. Mn(2+) is required as a cofactor.

The protein localises to the cell membrane. It catalyses the reaction a 4-hydroxy-3-(all-trans-polyprenyl)benzoate + H(+) = a 2-(all-trans-polyprenyl)phenol + CO2. The protein operates within cofactor biosynthesis; ubiquinone biosynthesis. Its function is as follows. Catalyzes the decarboxylation of 3-octaprenyl-4-hydroxy benzoate to 2-octaprenylphenol, an intermediate step in ubiquinone biosynthesis. The protein is 3-octaprenyl-4-hydroxybenzoate carboxy-lyase of Pseudomonas aeruginosa (strain LESB58).